Here is a 523-residue protein sequence, read N- to C-terminus: Putative pentatricopeptide repeat-containing protein At3g15200 (523 aa).

10 PPR repeats span residues 142–172, 177–211, 212–242, 246–280, 281–315, 316–350, 351–385, 388–418, 420–454, and 455–489; these read SSML…MSKR, NEKT…GIDD, DLVA…RRRE, DIKA…KCRP, DVVS…RRNP, DVKI…GPDP, NVVT…GGSC, NDVT…NKCE, TSDL…GLGP, and DQRT…GMVP. Residues 497 to 523 are disordered; that stretch reads LNQNKTKPRVEDKMLRSNLTSEESESD.

The protein belongs to the PPR family. P subfamily.

The sequence is that of Putative pentatricopeptide repeat-containing protein At3g15200 from Arabidopsis thaliana (Mouse-ear cress).